The primary structure comprises 247 residues: UPF0246 protein CD630_18230 (247 aa).

It belongs to the UPF0246 family.

This is UPF0246 protein CD630_18230 from Clostridioides difficile (strain 630) (Peptoclostridium difficile).